The chain runs to 313 residues: Leucine-rich repeat-containing protein 52 (313 aa).

Positions 1–23 are cleaved as a signal peptide; the sequence is MSLASGPGPGWLLFSFGMGLVSG. An LRRNT domain is found at 24-53; sequence SKCPNNCLCQAQEVICTGKQLTEYPLDIPL. At 24–244 the chain is on the extracellular side; it reads SKCPNNCLCQ…MCITHLDHKD (221 aa). Intrachain disulfides connect C26–C32 and C30–C39. 5 LRR repeats span residues 54–75, 78–99, 102–123, 126–148, and 151–172; these read NTRR…HLGL, DLVY…TFIG, KLIY…TFSV, NLVQ…TFAN, and SLRY…ALYH. N-linked (GlcNAc...) asparagine glycosylation is found at N112 and N148. Residues 184 to 238 form the LRRCT domain; that stretch reads NPWKCNCSFLDFAIFLIVFHMDPSDDLNATCVEPTELTGWPITRVGNPLRYMCIT. Cystine bridges form between C188/C214 and C190/C236. Residues N189 and N211 are each glycosylated (N-linked (GlcNAc...) asparagine). Residues 245 to 265 form a helical membrane-spanning segment; the sequence is YIFLLLIGFCIFAAGTVAAWL. The Cytoplasmic segment spans residues 266 to 313; the sequence is TGVCAVLYQNTRHKSSEEDEDEAGTRVEVSRRIFQTQTSSVQEFPQLI.

In terms of assembly, may interact with KCNU1; this interaction may be required for LRRC52 stability and may change the channel gating properties. Interacts with KCNMA1. In terms of processing, N-glycosylated. In terms of tissue distribution, mainly expressed in testis and skeletal muscle.

The protein localises to the cell membrane. Its function is as follows. Auxiliary protein of the large-conductance, voltage and calcium-activated potassium channel (BK alpha). Modulates gating properties by producing a marked shift in the BK channel's voltage dependence of activation in the hyperpolarizing direction, and in the absence of calcium. KCNU1 channel auxiliary protein. Modulates KCNU1 gating properties. The protein is Leucine-rich repeat-containing protein 52 (LRRC52) of Homo sapiens (Human).